The sequence spans 469 residues: Argininosuccinate lyase (469 aa).

It belongs to the lyase 1 family. Argininosuccinate lyase subfamily.

The protein localises to the cytoplasm. The catalysed reaction is 2-(N(omega)-L-arginino)succinate = fumarate + L-arginine. Its pathway is amino-acid biosynthesis; L-arginine biosynthesis; L-arginine from L-ornithine and carbamoyl phosphate: step 3/3. This is Argininosuccinate lyase from Mycolicibacterium smegmatis (strain ATCC 700084 / mc(2)155) (Mycobacterium smegmatis).